The following is a 498-amino-acid chain: Type II secretion system protein E (498 aa).

Residues Cys-394, Cys-397, Cys-425, and Cys-428 each coordinate Zn(2+).

This sequence belongs to the GSP E family. In terms of assembly, forms homooligomers; most probably hexamers. Interacts with OutL/GspL. The cofactor is Zn(2+).

The protein resides in the cell inner membrane. It catalyses the reaction ATP + H2O + cellular proteinSide 1 = ADP + phosphate + cellular proteinSide 2.. In terms of biological role, ATPase component of the type II secretion system required for the energy-dependent secretion of extracellular factors such as proteases and toxins from the periplasm. Acts as a molecular motor to provide the energy that is required for assembly of the pseudopilus and the extrusion of substrates generated in the cytoplasm. The chain is Type II secretion system protein E (outE) from Dickeya dadantii (strain 3937) (Erwinia chrysanthemi (strain 3937)).